The following is a 131-amino-acid chain: MSWQTYVDEHLMCEIEGHHLTSAAIVGHDGATWAQSTAFPEFKPEEMAAIMKDFDEPGHLAPTGLILGGTKYMVIQGEPGAVIRGKKGSGGITVKKTGQSLIIGIYDEPMTPGQCNLVVERLGDYLLEQGM.

An intrachain disulfide couples Cys-13 to Cys-115. Residues 81 to 97 (AVIRGKKGSGGITVKKT) carry the Involved in PIP2 interaction motif. Thr-111 bears the Phosphothreonine mark.

This sequence belongs to the profilin family. As to quaternary structure, multimer. Occurs in many kinds of cells as a complex with monomeric actin in a 1:1 ratio. In terms of processing, phosphorylated by MAP kinases. As to expression, pollen specific.

Its subcellular location is the cytoplasm. The protein resides in the cytoskeleton. In terms of biological role, binds to actin and affects the structure of the cytoskeleton. At high concentrations, profilin prevents the polymerization of actin, whereas it enhances it at low concentrations. By binding to PIP2, it inhibits the formation of IP3 and DG. The sequence is that of Profilin-1 (PRO1) from Zea mays (Maize).